Here is a 130-residue protein sequence, read N- to C-terminus: Universal stress protein MSMEG_4207 (130 aa).

Lys104 bears the N6-acetyllysine mark.

Belongs to the universal stress protein A family. In terms of processing, acetylated on Lys-104 by PatA in the presence of acetyl-CoA as an acetyl donor.

This chain is Universal stress protein MSMEG_4207, found in Mycolicibacterium smegmatis (strain ATCC 700084 / mc(2)155) (Mycobacterium smegmatis).